Reading from the N-terminus, the 110-residue chain is MTSTRKLSVSCLIVFMVSSLIAVSSGWLSIGKIAIKDGKCDPKNGNLYAIGEKWYNDEDCFEITCIQGDKGSVAQQVASCPVHAVKPGCELVFPGGTYPKCCPYYECPNS.

The first 26 residues, 1–26, serve as a signal peptide directing secretion; the sequence is MTSTRKLSVSCLIVFMVSSLIAVSSG.

This sequence belongs to the scoloptoxin-16 family. Contains 4 disulfide bonds. In terms of tissue distribution, expressed by the venom gland.

It is found in the secreted. The sequence is that of U-scoloptoxin(16)-Er6a from Ethmostigmus rubripes (Giant centipede).